We begin with the raw amino-acid sequence, 441 residues long: Ribulose bisphosphate carboxylase large chain (441 aa).

Positions 89 and 139 each coordinate substrate. K141 serves as the catalytic Proton acceptor. K143 contacts substrate. Mg(2+)-binding residues include K167, D169, and E170. K167 carries the N6-carboxylysine modification. The active-site Proton acceptor is H260. Residues R261, H293, and S345 each coordinate substrate.

It belongs to the RuBisCO large chain family. Type I subfamily. Heterohexadecamer of 8 large chains and 8 small chains; disulfide-linked. The disulfide link is formed within the large subunit homodimers. Requires Mg(2+) as cofactor. Post-translationally, the disulfide bond which can form in the large chain dimeric partners within the hexadecamer appears to be associated with oxidative stress and protein turnover.

It is found in the plastid. It localises to the chloroplast. The enzyme catalyses 2 (2R)-3-phosphoglycerate + 2 H(+) = D-ribulose 1,5-bisphosphate + CO2 + H2O. The catalysed reaction is D-ribulose 1,5-bisphosphate + O2 = 2-phosphoglycolate + (2R)-3-phosphoglycerate + 2 H(+). RuBisCO catalyzes two reactions: the carboxylation of D-ribulose 1,5-bisphosphate, the primary event in carbon dioxide fixation, as well as the oxidative fragmentation of the pentose substrate in the photorespiration process. Both reactions occur simultaneously and in competition at the same active site. The polypeptide is Ribulose bisphosphate carboxylase large chain (Coriandrum sativum (Coriander)).